Here is a 130-residue protein sequence, read N- to C-terminus: Glycine cleavage system H protein (130 aa).

Residues 24–106 (TATVGITDFA…YGDGWMFKVK (83 aa)) form the Lipoyl-binding domain. N6-lipoyllysine is present on Lys65.

Belongs to the GcvH family. In terms of assembly, the glycine cleavage system is composed of four proteins: P, T, L and H. (R)-lipoate is required as a cofactor.

Functionally, the glycine cleavage system catalyzes the degradation of glycine. The H protein shuttles the methylamine group of glycine from the P protein to the T protein. This Marinobacter nauticus (strain ATCC 700491 / DSM 11845 / VT8) (Marinobacter aquaeolei) protein is Glycine cleavage system H protein.